The primary structure comprises 192 residues: Glycerol-3-phosphate acyltransferase (192 aa).

The next 5 helical transmembrane spans lie at 1–21 (MFIAILMGAYLLGSIPFAYIL), 49–69 (GLAGLVLLLDIAKSAVLIYSL), 80–100 (ELCIVGLLSVLGHIYPIWLKF), 110–130 (IGVIIPLNPLMLCVFFISWLF), and 143–163 (IVSIIATMIVCYLTESGVVAL).

This sequence belongs to the PlsY family. Probably interacts with PlsX.

The protein localises to the cell inner membrane. The catalysed reaction is an acyl phosphate + sn-glycerol 3-phosphate = a 1-acyl-sn-glycero-3-phosphate + phosphate. It participates in lipid metabolism; phospholipid metabolism. In terms of biological role, catalyzes the transfer of an acyl group from acyl-phosphate (acyl-PO(4)) to glycerol-3-phosphate (G3P) to form lysophosphatidic acid (LPA). This enzyme utilizes acyl-phosphate as fatty acyl donor, but not acyl-CoA or acyl-ACP. The protein is Glycerol-3-phosphate acyltransferase of Anaplasma phagocytophilum (strain HZ).